We begin with the raw amino-acid sequence, 158 residues long: Cyclic pyranopterin monophosphate synthase (158 aa).

Substrate is bound by residues Met74 to His76 and Met112 to Glu113. Asp127 is an active-site residue.

Belongs to the MoaC family. Homohexamer; trimer of dimers.

The catalysed reaction is (8S)-3',8-cyclo-7,8-dihydroguanosine 5'-triphosphate = cyclic pyranopterin phosphate + diphosphate. Its pathway is cofactor biosynthesis; molybdopterin biosynthesis. Functionally, catalyzes the conversion of (8S)-3',8-cyclo-7,8-dihydroguanosine 5'-triphosphate to cyclic pyranopterin monophosphate (cPMP). This is Cyclic pyranopterin monophosphate synthase from Helicobacter pylori (strain ATCC 700392 / 26695) (Campylobacter pylori).